We begin with the raw amino-acid sequence, 560 residues long: Poly(3-hydroxyalkanoate) polymerase 2 (560 aa).

The active site involves C296.

It belongs to the PHA/PHB synthase family. Type II PhaC subfamily.

Its pathway is biopolymer metabolism; poly-(R)-3-hydroxybutanoate biosynthesis. Its function is as follows. Synthesizes poly(3-hydroxyalkanoates) (PHA), complements a mutant of P.putida that does not make PHA. This chain is Poly(3-hydroxyalkanoate) polymerase 2, found in Ectopseudomonas oleovorans (Pseudomonas oleovorans).